We begin with the raw amino-acid sequence, 62 residues long: Synergistic-type venom protein C8S2, chain 1 (62 aa).

Cystine bridges form between C3-C24, C17-C42, and C46-C57.

This sequence belongs to the three-finger toxin family. Short-chain subfamily. Aminergic toxin sub-subfamily. As to quaternary structure, heterodimer of C8S2 chain 1 and chain 2 (AC P01411); disulfide-linked. In terms of tissue distribution, expressed by the venom gland.

The protein resides in the secreted. This protein shows a synergetic toxic effect in that it enhances the toxicity of other toxins. This is Synergistic-type venom protein C8S2, chain 1 from Dendroaspis angusticeps (Eastern green mamba).